The sequence spans 318 residues: Malonyl-S-ACP:biotin-protein carboxyltransferase MADC (318 aa).

The CoA carboxyltransferase N-terminal domain occupies 2 to 257 (AKWTELQDKS…VLQKPMEEIE (256 aa)).

It is found in the cytoplasm. It catalyses the reaction N(6)-biotinyl-L-lysyl-[protein] + malonyl-[ACP] = N(6)-carboxybiotinyl-L-lysyl-[protein] + acetyl-[ACP]. Functionally, gamma subunit of the biotin-dependent malonate decarboxylase multienzyme complex (EC 7.2.4.4). The two subunits MADC and MADD are required for the transfer of the malonate carboxy group from the acyl-carrier protein (ACP) to the prosthetic group of the biotin carrier MADF. Required for the regeneration of ACP. The protein is Malonyl-S-ACP:biotin-protein carboxyltransferase MADC (madC) of Malonomonas rubra.